A 496-amino-acid polypeptide reads, in one-letter code: Acetyltransferase adrJ (496 aa).

Active-site proton acceptor residues include His174 and Asp421.

Belongs to the plant acyltransferase family. Monomer.

Its pathway is secondary metabolite biosynthesis; terpenoid biosynthesis. In terms of biological role, acetyltransferase; part of the gene cluster that mediates the biosynthesis of andrastins, meroterpenoid compounds that exhibit inhibitory activity against ras farnesyltransferase, suggesting that they could be promising leads for antitumor agents. The first step of the pathway is the synthesis of 3,5-dimethylorsellinic acid (DMOA) by the polyketide synthase adrD via condensation of one acetyl-CoA starter unit with 3 malonyl-CoA units and 2 methylations. DMAO is then converted to farnesyl-DMAO by the prenyltransferase adrG. The methyltransferase adrK catalyzes the methylation of the carboxyl group of farnesyl-DMAO to farnesyl-DMAO methyl ester which is further converted to epoxyfarnesyl-DMAO methyl ester by the FAD-dependent monooxygenase adrH. The terpene cyclase adrI then catalyzes the carbon skeletal rearrangement to generate the andrastin E, the first compound in the pathway having the andrastin scaffold, with the tetracyclic ring system. The post-cyclization tailoring enzymes adrF, adrE, adrJ, and adrA, are involved in the conversion of andrastin E into andrastin A. The short chain dehydrogenase adrF is responsible for the oxidation of the C-3 a hydroxyl group of andrastin E to yield the corresponding ketone, andrastin D. The ketoreductase adrE stereoselectively reduces the carbonyl moiety to reverse the stereochemistry of the C-3 position to yield andrastin F. The acetyltransferase adrJ is the acetyltransferase that attaches the acetyl group to the C-3 hydroxyl group of andrastin F to yield andrastin C. Finally, the cytochrome P450 monooxygenase adrA catalyzes two sequential oxidation reactions of the C-23 methyl group, to generate the corresponding alcohol andrastin B, and aldehyde andrastin A. In Penicillium roqueforti, this protein is Acetyltransferase adrJ.